A 103-amino-acid chain; its full sequence is Zinc-containing ferredoxin (103 aa).

Positions 1 to 36 (GIDPNYRTSKPVVGDHSGHKIYGPVESPKVLGVHGT) are N-terminal extension. Histidine 19 serves as a coordination point for Zn(2+). At lysine 29 the chain carries N6-methyllysine. Histidine 34 contributes to the Zn(2+) binding site. 4Fe-4S ferredoxin-type domains follow at residues 35 to 65 (GTIVGVDFDLCIADGSCITACPVNVFQWYET) and 74 to 103 (KADPVNEQACIFCMACVNVCPVAAIDVKPP). The [3Fe-4S] cluster site is built by cysteine 45 and cysteine 51. Residue cysteine 55 coordinates [4Fe-4S] cluster. Aspartate 76 contacts Zn(2+). Cysteine 83, cysteine 86, and cysteine 89 together coordinate [4Fe-4S] cluster. Cysteine 93 contributes to the [3Fe-4S] cluster binding site.

[3Fe-4S] cluster serves as cofactor. It depends on [4Fe-4S] cluster as a cofactor. Requires Zn(2+) as cofactor.

Functionally, ferredoxins are iron-sulfur proteins that transfer electrons in a wide variety of metabolic reactions. This is Zinc-containing ferredoxin (zfx) from Sulfolobus acidocaldarius (strain ATCC 33909 / DSM 639 / JCM 8929 / NBRC 15157 / NCIMB 11770).